The primary structure comprises 353 residues: tRNA-specific 2-thiouridylase MnmA 2 (353 aa).

ATP contacts are provided by residues 9–16 and Met-35; that span reads AMSGGVDS. Residue Cys-98 is the Nucleophile of the active site. Residues Cys-98 and Cys-194 are joined by a disulfide bond. Gly-122 is an ATP binding site. The interval 144 to 146 is interaction with tRNA; sequence KDQ. Catalysis depends on Cys-194, which acts as the Cysteine persulfide intermediate. The segment at 300 to 301 is interaction with tRNA; that stretch reads RY.

It belongs to the MnmA/TRMU family.

The protein resides in the cytoplasm. The catalysed reaction is S-sulfanyl-L-cysteinyl-[protein] + uridine(34) in tRNA + AH2 + ATP = 2-thiouridine(34) in tRNA + L-cysteinyl-[protein] + A + AMP + diphosphate + H(+). Functionally, catalyzes the 2-thiolation of uridine at the wobble position (U34) of tRNA, leading to the formation of s(2)U34. The protein is tRNA-specific 2-thiouridylase MnmA 2 of Clostridium botulinum (strain Langeland / NCTC 10281 / Type F).